Consider the following 313-residue polypeptide: Zinc transporter ZitB (313 aa).

The Cytoplasmic portion of the chain corresponds to 1–20 (MAHSHSHTSSHLPEDNNARR). A helical membrane pass occupies residues 21–41 (LLYAFGVTAGFMLVEVVGGFL). Residues 42–47 (SGSLAL) are Periplasmic-facing. Residues 48–68 (LADAGHMLTDTAALLFALLAV) form a helical membrane-spanning segment. At 69–89 (QFSRRPPTIRHTFGWLRLTTL) the chain is on the cytoplasmic side. The helical transmembrane segment at 90–110 (AAFVNAIALVVITILIVWEAI) threads the bilayer. At 111–121 (ERFRTPRPVEG) the chain is on the periplasmic side. Residues 122–142 (GMMMAIAVAGLLANILSFWLL) traverse the membrane as a helical segment. Over 143 to 159 (HHGSEEKNLNVRAAALH) the chain is Cytoplasmic. The chain crosses the membrane as a helical span at residues 160-180 (VLGDLLGSVGAIIAALIIIWT). A topological domain (periplasmic) is located at residue glycine 181. The chain crosses the membrane as a helical span at residues 182–202 (WTPADPILSILVSLLVLRSAW). At 203–313 (RLLKDSVNEL…GVSGHSHHHH (111 aa)) the chain is on the cytoplasmic side.

It belongs to the cation diffusion facilitator (CDF) transporter (TC 2.A.4) family. SLC30A subfamily.

The protein localises to the cell inner membrane. Its function is as follows. Involved in zinc efflux across the cytoplasmic membrane, thus reducing zinc accumulation in the cytoplasm and rendering bacteria more resistant to zinc. It may contribute to zinc homeostasis at low concentrations of zinc. This chain is Zinc transporter ZitB (zitB), found in Shigella flexneri.